We begin with the raw amino-acid sequence, 427 residues long: Histidinol dehydrogenase (427 aa).

3 residues coordinate NAD(+): Tyr-125, Gln-186, and Asn-209. Ser-234, Gln-256, and His-259 together coordinate substrate. The Zn(2+) site is built by Gln-256 and His-259. Active-site proton acceptor residues include Glu-325 and His-326. Substrate is bound by residues His-326, Asp-359, Glu-413, and His-419. Asp-359 contributes to the Zn(2+) binding site. Residue His-419 participates in Zn(2+) binding.

This sequence belongs to the histidinol dehydrogenase family. Zn(2+) is required as a cofactor.

It carries out the reaction L-histidinol + 2 NAD(+) + H2O = L-histidine + 2 NADH + 3 H(+). It functions in the pathway amino-acid biosynthesis; L-histidine biosynthesis; L-histidine from 5-phospho-alpha-D-ribose 1-diphosphate: step 9/9. Its function is as follows. Catalyzes the sequential NAD-dependent oxidations of L-histidinol to L-histidinaldehyde and then to L-histidine. This Leptospira interrogans serogroup Icterohaemorrhagiae serovar Lai (strain 56601) protein is Histidinol dehydrogenase.